The primary structure comprises 426 residues: MSAPLAEVDPDIAELLAKELGRQRDTLEMIASENFAPRAVLQAQGSVLTNKYAEGLPGRRYYGGCEHVDVVENLARDRAKALFGAEFANVQPHSGAQANAAVLHALMSPGERLLGLDLANGGHLTHGMRLNFSGKLYENGFYGVDPATHLIDMDAVRATALEFRPKVIIAGWSAYPRVLDFAAFRSIADEVGAKLLVDMAHFAGLVAAGLHPSPVPHADVVSTTVHKTLGGGRSGLIVGKQQYAKAINSAVFPGQQGGPLMHVIAGKAVALKIAATPEFADRQRRTLSGARIIADRLMAPDVAKAGVSVVSGGTDVHLVLVDLRDSPLDGQAAEDLLHEVGITVNRNAVPNDPRPPMVTSGLRIGTPALATRGFGDTEFTEVADIIATALATGSSVDVSALKDRATRLARAFPLYDGLEEWSLVGR.

(6S)-5,6,7,8-tetrahydrofolate contacts are provided by residues Leu-118 and 122–124 (GHL). Lys-227 is subject to N6-(pyridoxal phosphate)lysine.

This sequence belongs to the SHMT family. Homodimer. It depends on pyridoxal 5'-phosphate as a cofactor.

Its subcellular location is the cytoplasm. The enzyme catalyses (6R)-5,10-methylene-5,6,7,8-tetrahydrofolate + glycine + H2O = (6S)-5,6,7,8-tetrahydrofolate + L-serine. It participates in one-carbon metabolism; tetrahydrofolate interconversion. Its pathway is amino-acid biosynthesis; glycine biosynthesis; glycine from L-serine: step 1/1. In terms of biological role, catalyzes the reversible interconversion of serine and glycine with tetrahydrofolate (THF) serving as the one-carbon carrier. This reaction serves as the major source of one-carbon groups required for the biosynthesis of purines, thymidylate, methionine, and other important biomolecules. Also exhibits THF-independent aldolase activity toward beta-hydroxyamino acids, producing glycine and aldehydes, via a retro-aldol mechanism. The protein is Serine hydroxymethyltransferase 1 of Mycobacterium bovis (strain ATCC BAA-935 / AF2122/97).